We begin with the raw amino-acid sequence, 245 residues long: 14-3-3 protein zeta/delta (245 aa).

The residue at position 1 (Met-1) is an N-acetylmethionine. Lys-3 carries the N6-acetyllysine modification. A Phosphoserine; by PKA modification is found at Ser-58. N6-acetyllysine is present on Lys-68. Phosphoserine is present on residues Ser-184, Ser-207, and Ser-210. At Thr-232 the chain carries Phosphothreonine; by CK1.

It belongs to the 14-3-3 family. Homodimer. Heterodimerizes with YWHAE. Homo- and heterodimerization is inhibited by phosphorylation on Ser-58. Interacts with FOXO4, NOXA1, SSH1 ARHGEF2, CDK16 and BSPRY. Interacts with WEE1 (C-terminal). Interacts with MLF1 (phosphorylated form); the interaction retains it in the cytoplasm. Interacts with BAX; the interaction occurs in the cytoplasm. Under stress conditions, MAPK8-mediated phosphorylation releases BAX to mitochondria. Interacts with TP53; the interaction enhances p53 transcriptional activity. The Ser-58 phosphorylated form inhibits this interaction and p53 transcriptional activity. Interacts with ABL1 (phosphorylated form); the interaction retains ABL1 in the cytoplasm. Interacts with PKA-phosphorylated AANAT; the interaction modulates AANAT enzymatic activity by increasing affinity for arylalkylamines and acetyl-CoA and protecting the enzyme from dephosphorylation and proteasomal degradation. It may also prevent thiol-dependent inactivation. Interacts with AKT1; the interaction phosphorylates YWHAZ and modulates dimerization. Interacts with GAB2. Interacts with BCL2L11, SAMSN1 and TLK2. Interacts with phosphorylated RAF1; the interaction is inhibited when YWHAZ is phosphorylated on Thr-232. Interacts with Thr-phosphorylated ITGB2. Interacts with the 'Thr-369' phosphorylated form of DAPK2. Interacts with PI4KB, TBC1D22A and TBC1D22B. Interacts with ZFP36L1 (via phosphorylated form); this interaction occurs in a p38 MAPK- and AKT-signaling pathways. Interacts with SLITRK1. Interacts with AK5, LDB1, MADD, MARK3, PDE1A and SMARCB1. Interacts with YWHAZ. Interacts with MEFV. Interacts with ADAM22 (via C-terminus). The delta, brain-specific form differs from the zeta form in being phosphorylated. Phosphorylation on Ser-184 by MAPK8; promotes dissociation of BAX and translocation of BAX to mitochondria. Phosphorylation on Thr-232; inhibits binding of RAF1. Phosphorylated on Ser-58 by PKA and protein kinase C delta type catalytic subunit in a sphingosine-dependent fashion. Phosphorylation on Ser-58 by PKA; disrupts homodimerization and heterodimerization with YHAE and TP53.

The protein localises to the cytoplasm. It localises to the melanosome. Its function is as follows. Adapter protein implicated in the regulation of a large spectrum of both general and specialized signaling pathways. Binds to a large number of partners, usually by recognition of a phosphoserine or phosphothreonine motif. Binding generally results in the modulation of the activity of the binding partner. Promotes cytosolic retention and inactivation of TFEB transcription factor by binding to phosphorylated TFEB. Induces ARHGEF7 activity on RAC1 as well as lamellipodia and membrane ruffle formation. In neurons, regulates spine maturation through the modulation of ARHGEF7 activity. This chain is 14-3-3 protein zeta/delta (YWHAZ), found in Bos taurus (Bovine).